A 484-amino-acid polypeptide reads, in one-letter code: MKLRDLAGVLPVEGTASADLEVTGISSDSRQVKPGVVFFALAGTKADGAAYAADAARRGALAVVAGKSNSVAGLPVPVLTVDDPRLALALSAARYFGKQPRTMVAVTGTSGKTSVAAFTRQIWEQAGYAAASIGTTGVVAPGRNEYGSLTTPDPVALHQLLRELADAGVTYASMEASSHGLDQRRLDGVKLAAGGFTNLGRDHMDYHPTVEDYHRAKLRLFDTLLPKGAPAVIFADDPWSAPTIQAAQAAGLNVLTVGRHGDFLTLKRVEHERHRQRAEVEAEGVLYEIDLPLAGDFQISNALVSAGLAISTGTPVAKALAALEKLKGAPGRLDLVGTTVSGAPVYVDYAHKPDALENVLASVRPFTTGRVMVVFGCGGDRDRGKRPIMGEIATRLADVVIVTDDNPRSEVPETIRAAILAAAPGAIEIGDRRKAIHEAVGMLHAGDTLIVAGKGHEEGQTIGSETLHFSDHEEVRAALRERAA.

Residue S29 participates in UDP-N-acetyl-alpha-D-muramoyl-L-alanyl-D-glutamate binding. 108-114 contributes to the ATP binding site; the sequence is GTSGKTS. UDP-N-acetyl-alpha-D-muramoyl-L-alanyl-D-glutamate contacts are provided by residues 150 to 151, S177, Q183, and R185; that span reads TT. At K217 the chain carries N6-carboxylysine. Meso-2,6-diaminopimelate contacts are provided by residues R381, 405 to 408, G453, and E457; that span reads DNPR. The Meso-diaminopimelate recognition motif motif lies at 405 to 408; it reads DNPR.

Belongs to the MurCDEF family. MurE subfamily. Mg(2+) serves as cofactor. Carboxylation is probably crucial for Mg(2+) binding and, consequently, for the gamma-phosphate positioning of ATP.

The protein localises to the cytoplasm. The enzyme catalyses UDP-N-acetyl-alpha-D-muramoyl-L-alanyl-D-glutamate + meso-2,6-diaminopimelate + ATP = UDP-N-acetyl-alpha-D-muramoyl-L-alanyl-gamma-D-glutamyl-meso-2,6-diaminopimelate + ADP + phosphate + H(+). It functions in the pathway cell wall biogenesis; peptidoglycan biosynthesis. Functionally, catalyzes the addition of meso-diaminopimelic acid to the nucleotide precursor UDP-N-acetylmuramoyl-L-alanyl-D-glutamate (UMAG) in the biosynthesis of bacterial cell-wall peptidoglycan. This is UDP-N-acetylmuramoyl-L-alanyl-D-glutamate--2,6-diaminopimelate ligase from Mesorhizobium japonicum (strain LMG 29417 / CECT 9101 / MAFF 303099) (Mesorhizobium loti (strain MAFF 303099)).